We begin with the raw amino-acid sequence, 389 residues long: Chalcone synthase H2 (389 aa).

Residue C164 is part of the active site.

The protein belongs to the thiolase-like superfamily. Chalcone/stilbene synthases family.

The protein localises to the cytoplasm. The catalysed reaction is (E)-4-coumaroyl-CoA + 3 malonyl-CoA + 3 H(+) = 2',4,4',6'-tetrahydroxychalcone + 3 CO2 + 4 CoA. The protein operates within secondary metabolite biosynthesis; flavonoid biosynthesis. In terms of biological role, involved in the biosynthesis of prenylated phenolics natural products which contribute to the bitter taste of beer and display broad biological activities. Chalcone synthase that can use 4-coumaroyl-CoA to produce 4,2',4',6'-tetrahydroxychalcone (also termed naringenin-chalcone or chalcone) which can, under specific conditions, spontaneously isomerize into naringenin. This chain is Chalcone synthase H2, found in Humulus lupulus (European hop).